Reading from the N-terminus, the 142-residue chain is ATP synthase epsilon chain (142 aa).

It belongs to the ATPase epsilon chain family. In terms of assembly, F-type ATPases have 2 components, CF(1) - the catalytic core - and CF(0) - the membrane proton channel. CF(1) has five subunits: alpha(3), beta(3), gamma(1), delta(1), epsilon(1). CF(0) has three main subunits: a, b and c.

It is found in the cell inner membrane. Produces ATP from ADP in the presence of a proton gradient across the membrane. This Actinobacillus succinogenes (strain ATCC 55618 / DSM 22257 / CCUG 43843 / 130Z) protein is ATP synthase epsilon chain.